Here is a 226-residue protein sequence, read N- to C-terminus: Gap junction beta-2 protein (226 aa).

Residues 2–13 lie within the membrane without spanning it; sequence DWGTLQTILGGV. At 14–20 the chain is on the cytoplasmic side; the sequence is NKHSTSI. Residues 21–40 traverse the membrane as a helical segment; that stretch reads GKIWLTVLFIFRIMILVVAA. At 41–73 the chain is on the extracellular side; sequence KEVWGDEQADFVCNTLQPGCKNVCYDHYFPISH. The Ca(2+) site is built by Glu-42, Gly-45, and Glu-47. 3 disulfides stabilise this stretch: Cys-53-Cys-180, Cys-60-Cys-174, and Cys-64-Cys-169. A helical membrane pass occupies residues 74 to 94; it reads IRLWALQLIFVSTPALLVAMH. The Cytoplasmic portion of the chain corresponds to 95 to 135; that stretch reads VAYRRHEKKRKFIKGEIKSEFKDIEEIKTQKVRIEGSLWWT. Residues 136–156 traverse the membrane as a helical segment; the sequence is YTSSIFFRVIFEAAFMYVFYV. Topologically, residues 157–189 are extracellular; sequence MYDGFSMQRLVKCNAWPCPNTVDCFVSRPTEKT. Residues 190-210 traverse the membrane as a helical segment; the sequence is VFTVFMIAVSGICILLNVTEL. Residues 211–226 are Cytoplasmic-facing; the sequence is CYLLIRYCSGKSKKPV.

The protein belongs to the connexin family. Beta-type (group I) subfamily. A hemichannel or connexon is composed of a hexamer of connexins. A functional gap junction is formed by the apposition of two hemichannels. Forms heteromeric channels with GJB4. Interacts with CNST.

It is found in the cell membrane. It localises to the cell junction. The protein resides in the gap junction. Its function is as follows. Structural component of gap junctions. Gap junctions are dodecameric channels that connect the cytoplasm of adjoining cells. They are formed by the docking of two hexameric hemichannels, one from each cell membrane. Small molecules and ions diffuse from one cell to a neighboring cell via the central pore. The protein is Gap junction beta-2 protein (GJB2) of Gorilla gorilla gorilla (Western lowland gorilla).